We begin with the raw amino-acid sequence, 189 residues long: Fucolectin-5 (189 aa).

A signal peptide spans 1-31; that stretch reads MKTCNLTDRMKVKMIMLLFQILAISTLQSDS. Residues 40–189 are F5/8 type C-like; the sequence is QENVAVRGKA…VEVNALLPAN (150 aa). Ca(2+) is bound by residues D70, N72, and S81. Cystine bridges form between C82–C178, C114–C115, and C140–C156. The alpha-L-fucose site is built by H84 and R111. A Cell attachment site motif is present at residues 111–113; sequence RGD. R118 contacts alpha-L-fucose. C178 and E179 together coordinate Ca(2+).

Belongs to the fucolectin family. Homotrimer. As to expression, gill mucous cells.

The protein localises to the secreted. Its function is as follows. Acts as a defensive agent. Recognizes blood group fucosylated oligosaccharides including A, B, H and Lewis B-type antigens. Does not recognize Lewis A antigen and has low affinity for monovalent haptens. The polypeptide is Fucolectin-5 (Anguilla japonica (Japanese eel)).